A 179-amino-acid chain; its full sequence is Ribosome-recycling factor (179 aa).

This sequence belongs to the RRF family.

The protein localises to the cytoplasm. Functionally, responsible for the release of ribosomes from messenger RNA at the termination of protein biosynthesis. May increase the efficiency of translation by recycling ribosomes from one round of translation to another. The polypeptide is Ribosome-recycling factor (Chlamydia trachomatis serovar L2b (strain UCH-1/proctitis)).